The sequence spans 2352 residues: Highly reducing polyketide synthase ZEA2 (2352 aa).

Positions 9-433 (PGPVAIVGLA…GTNGHVVLEA (425 aa)) constitute a Ketosynthase family 3 (KS3) domain. Residues C181, H316, and H356 each act as for beta-ketoacyl synthase activity in the active site. Residues 544-875 (FVFTGQGAQW…LATSLFLQGV (332 aa)) are malonyl-CoA:ACP transacylase (MAT) domain. S634 serves as the catalytic For malonyltransferase activity. The interval 923–1058 (RSIIGAPVPK…GLITIDYEGN (136 aa)) is N-terminal hotdog fold. A PKS/mFAS DH domain is found at 923–1242 (RSIIGAPVPK…TSELEMDGAA (320 aa)). Positions 925–1237 (IIGAPVPKMN…VIDFRTSELE (313 aa)) are dehydratase (DH) domain. Residue H955 is the Proton acceptor; for dehydratase activity of the active site. Residues 1086 to 1242 (PATYAKDRFY…TSELEMDGAA (157 aa)) form a C-terminal hotdog fold region. Residue D1152 is the Proton donor; for dehydratase activity of the active site. Residues 1643–1955 (GLLDTLYFVD…QGKHRGKIVL (313 aa)) form an enoylreductase (ER) domain region. A catalytic ketoreductase (KRc) domain region spans residues 1979-2159 (ATYLFVGGLG…VSVNLGIMRD (181 aa)). A Carrier domain is found at 2269–2346 (KATEIITNAL…SFAGKLASTS (78 aa)). Position 2306 is an O-(pantetheine 4'-phosphoryl)serine (S2306).

The protein operates within mycotoxin biosynthesis. Highly reducing polyketide synthase; part of the gene cluster that mediates the biosynthesis of zearalenone (ZEA), a nonsteroid estrogen that is a contaminant of cereal grains and causes estrogenic disorders in humans and animals. The ZEA backbone is synthesized from a single acetyl-CoA molecule and eight malonyl-CoA molecules. The reducing polyketide synthase ZEA2 is proposed to synthesize a reduced hexaketide intermediate by using different combinations of its reductive domains during each round of condensation. The hexaketide thioester is then transacylated to the non-reducing polyketide synthase ZEA1 and is further condensed with three malonyl-CoAs without reductive tailoring to yield a mixed reduced/unreduced nonaketide. ZEA1 must be able to interact with ZEA2 to facilitate starter-unit acyltransfer and initiate polyketide biosynthesis. ZEA1 also mediates the required C2-C7 cyclization to form the resorcylate core and catalyzes the formation of the macrolactone. ZEB1 is then responsible for the chemical conversion of beta-zearalenonol (beta-ZOL) to ZEA in the biosynthetic pathway. The polypeptide is Highly reducing polyketide synthase ZEA2 (Gibberella zeae (strain ATCC MYA-4620 / CBS 123657 / FGSC 9075 / NRRL 31084 / PH-1) (Wheat head blight fungus)).